We begin with the raw amino-acid sequence, 377 residues long: Geranylgeranyl transferase type-1 subunit beta (377 aa).

4 PFTB repeats span residues 144–186 (KEAC…YMLN), 193–234 (MKKA…CLMG), 245–284 (LNRIKRWCIMRQQNGYHGRPNKPVDTCYSFWVGATLKLLK), and 291–333 (FEKN…SLME). Residues 219–221 (HGG) and 263–266 (RPNK) contribute to the geranylgeranyl diphosphate site. Zn(2+) contacts are provided by aspartate 269 and cysteine 271. 272–275 (YSFW) provides a ligand contact to geranylgeranyl diphosphate. Residue histidine 321 participates in Zn(2+) binding.

It belongs to the protein prenyltransferase subunit beta family. In terms of assembly, heterodimer of FNTA and PGGT1B. PGGT1B mediates interaction with substrate peptides. It depends on Zn(2+) as a cofactor. Mg(2+) serves as cofactor.

The catalysed reaction is geranylgeranyl diphosphate + L-cysteinyl-[protein] = S-geranylgeranyl-L-cysteinyl-[protein] + diphosphate. Functionally, catalyzes the transfer of a geranyl-geranyl moiety from geranyl-geranyl pyrophosphate to a cysteine at the fourth position from the C-terminus of proteins having the C-terminal sequence Cys-aliphatic-aliphatic-X. Known substrates include RAC1, RAC2, RAP1A and RAP1B. This chain is Geranylgeranyl transferase type-1 subunit beta (PGGT1B), found in Bos taurus (Bovine).